The chain runs to 156 residues: Small ribosomal subunit protein uS7 (156 aa).

This sequence belongs to the universal ribosomal protein uS7 family. Part of the 30S ribosomal subunit. Contacts proteins S9 and S11.

One of the primary rRNA binding proteins, it binds directly to 16S rRNA where it nucleates assembly of the head domain of the 30S subunit. Is located at the subunit interface close to the decoding center, probably blocks exit of the E-site tRNA. In Caldanaerobacter subterraneus subsp. tengcongensis (strain DSM 15242 / JCM 11007 / NBRC 100824 / MB4) (Thermoanaerobacter tengcongensis), this protein is Small ribosomal subunit protein uS7.